The chain runs to 469 residues: Light-independent protochlorophyllide reductase subunit N (469 aa).

3 residues coordinate [4Fe-4S] cluster: C24, C49, and C109.

It belongs to the BchN/ChlN family. As to quaternary structure, protochlorophyllide reductase is composed of three subunits; ChlL, ChlN and ChlB. Forms a heterotetramer of two ChlB and two ChlN subunits. The cofactor is [4Fe-4S] cluster.

The catalysed reaction is chlorophyllide a + oxidized 2[4Fe-4S]-[ferredoxin] + 2 ADP + 2 phosphate = protochlorophyllide a + reduced 2[4Fe-4S]-[ferredoxin] + 2 ATP + 2 H2O. Its pathway is porphyrin-containing compound metabolism; chlorophyll biosynthesis (light-independent). Component of the dark-operative protochlorophyllide reductase (DPOR) that uses Mg-ATP and reduced ferredoxin to reduce ring D of protochlorophyllide (Pchlide) to form chlorophyllide a (Chlide). This reaction is light-independent. The NB-protein (ChlN-ChlB) is the catalytic component of the complex. This chain is Light-independent protochlorophyllide reductase subunit N, found in Gloeobacter violaceus (strain ATCC 29082 / PCC 7421).